The primary structure comprises 120 residues: Large ribosomal subunit protein bL19c (120 aa).

It belongs to the bacterial ribosomal protein bL19 family.

Its subcellular location is the plastid. It localises to the chloroplast. This Thalassiosira weissflogii (Marine diatom) protein is Large ribosomal subunit protein bL19c.